Reading from the N-terminus, the 231-residue chain is MSRLTKQQILEQLKNGLIASCQPVDDGPMDSPEIVAAMAKASVIGGAAGLRIEGIDNLKAVRKVVDVPIVGIVKRDLPDSPVRITPFLQDIDDLYHAGADIIAFDGTDRVRPTTIEACARRIQELGAMSMADCSNYKEGMYCQELGVDLIGSTMSGYTGGETPDEPDVQLVRDLVASGCRVMAEGRYNTPELAAVAIENGAYAVTVGSALTRLEHIVSWFVTAIDDRKTGA.

This sequence belongs to the NanE family.

It carries out the reaction an N-acyl-D-glucosamine 6-phosphate = an N-acyl-D-mannosamine 6-phosphate. It functions in the pathway amino-sugar metabolism; N-acetylneuraminate degradation; D-fructose 6-phosphate from N-acetylneuraminate: step 3/5. In terms of biological role, converts N-acetylmannosamine-6-phosphate (ManNAc-6-P) to N-acetylglucosamine-6-phosphate (GlcNAc-6-P). The protein is Putative N-acetylmannosamine-6-phosphate 2-epimerase of Glaesserella parasuis serovar 5 (strain SH0165) (Haemophilus parasuis).